The sequence spans 163 residues: MNSSFSHLDGQGNVTMVDVGGKQATERVAIAEAVVELRPATLELLLKVALPKGDVLTCAKIGGIMAAKRVGEIIPLCHPLSLTYADIRFEVSEAPPRIRIEAETRTVGNTGVEMEAIVAAQTAAAVIYDMCKAVQRDIIISRVRLLHKRGGKSGEFNAPDMEE.

Substrate-binding positions include 76–78 (LCH) and 114–115 (ME). The active site involves Asp129.

This sequence belongs to the MoaC family. In terms of assembly, homohexamer; trimer of dimers.

The catalysed reaction is (8S)-3',8-cyclo-7,8-dihydroguanosine 5'-triphosphate = cyclic pyranopterin phosphate + diphosphate. It participates in cofactor biosynthesis; molybdopterin biosynthesis. In terms of biological role, catalyzes the conversion of (8S)-3',8-cyclo-7,8-dihydroguanosine 5'-triphosphate to cyclic pyranopterin monophosphate (cPMP). The polypeptide is Cyclic pyranopterin monophosphate synthase (Desulfovibrio desulfuricans (strain ATCC 27774 / DSM 6949 / MB)).